A 246-amino-acid polypeptide reads, in one-letter code: Proteasome subunit alpha type-6 (246 aa).

Belongs to the peptidase T1A family. In terms of assembly, the 26S proteasome consists of a 20S proteasome core and two 19S regulatory subunits. The 20S proteasome core is composed of 28 subunits that are arranged in four stacked rings, resulting in a barrel-shaped structure. The two end rings are each formed by seven alpha subunits, and the two central rings are each formed by seven beta subunits. The catalytic chamber with the active sites is on the inside of the barrel.

It is found in the cytoplasm. It localises to the nucleus. Its function is as follows. The proteasome is a multicatalytic proteinase complex which is characterized by its ability to cleave peptides with Arg, Phe, Tyr, Leu, and Glu adjacent to the leaving group at neutral or slightly basic pH. The proteasome has an ATP-dependent proteolytic activity. The protein is Proteasome subunit alpha type-6 (PAA1) of Oryza sativa subsp. japonica (Rice).